A 275-amino-acid polypeptide reads, in one-letter code: Putative carbamate hydrolase RutD (275 aa).

Belongs to the AB hydrolase superfamily. Hydrolase RutD family.

It catalyses the reaction carbamate + 2 H(+) = NH4(+) + CO2. Involved in pyrimidine catabolism. May facilitate the hydrolysis of carbamate, a reaction that can also occur spontaneously. This Escherichia coli (strain UTI89 / UPEC) protein is Putative carbamate hydrolase RutD.